Consider the following 286-residue polypeptide: Bifunctional protein FolD 2 (286 aa).

NADP(+) contacts are provided by residues 165–167 (GRG), threonine 192, and isoleucine 233.

The protein belongs to the tetrahydrofolate dehydrogenase/cyclohydrolase family. In terms of assembly, homodimer.

It carries out the reaction (6R)-5,10-methylene-5,6,7,8-tetrahydrofolate + NADP(+) = (6R)-5,10-methenyltetrahydrofolate + NADPH. It catalyses the reaction (6R)-5,10-methenyltetrahydrofolate + H2O = (6R)-10-formyltetrahydrofolate + H(+). The protein operates within one-carbon metabolism; tetrahydrofolate interconversion. In terms of biological role, catalyzes the oxidation of 5,10-methylenetetrahydrofolate to 5,10-methenyltetrahydrofolate and then the hydrolysis of 5,10-methenyltetrahydrofolate to 10-formyltetrahydrofolate. The sequence is that of Bifunctional protein FolD 2 from Salinispora arenicola (strain CNS-205).